The chain runs to 251 residues: Cell division protein ZapD (251 aa).

The protein belongs to the ZapD family. Interacts with FtsZ.

The protein resides in the cytoplasm. Cell division factor that enhances FtsZ-ring assembly. Directly interacts with FtsZ and promotes bundling of FtsZ protofilaments, with a reduction in FtsZ GTPase activity. This is Cell division protein ZapD from Burkholderia lata (strain ATCC 17760 / DSM 23089 / LMG 22485 / NCIMB 9086 / R18194 / 383).